A 491-amino-acid chain; its full sequence is Ubiquitin carboxyl-terminal hydrolase 30 (491 aa).

Residues 1 to 31 (MPWCKQGTTDKLVREFLRTGAAARNKMMKNW) lie on the Mitochondrial intermembrane side of the membrane. Residues 32–52 (GVIGGIAAAMAAGVYVLWGPI) form a helical membrane-spanning segment. Residues 53–491 (SDRRKKRKGM…MQRPGLRVEE (439 aa)) lie on the Cytoplasmic side of the membrane. The region spanning 64–482 (PGLLNLGNTC…SAYLLFYERM (419 aa)) is the USP domain. Cys73 acts as the Nucleophile in catalysis. Residues 346–355 (AQSQQKTSRT) show a composition bias toward polar residues. The interval 346 to 365 (AQSQQKTSRTNKAKASADPK) is disordered. His432 (proton acceptor) is an active-site residue.

The protein belongs to the peptidase C19 family.

The protein resides in the mitochondrion outer membrane. It carries out the reaction Thiol-dependent hydrolysis of ester, thioester, amide, peptide and isopeptide bonds formed by the C-terminal Gly of ubiquitin (a 76-residue protein attached to proteins as an intracellular targeting signal).. Deubiquitinating enzyme that acts as a key inhibitor of mitophagy by counteracting the action of parkin (PRKN). This chain is Ubiquitin carboxyl-terminal hydrolase 30 (usp30), found in Danio rerio (Zebrafish).